A 365-amino-acid polypeptide reads, in one-letter code: Myocyte-specific enhancer factor 2B (365 aa).

Residues 3–57 form the MADS-box domain; the sequence is RKKIQISRILDQRNRQVTFTKRKFGLMKKAYELSVLCDCEIALIIFNSANRLFQY. A DNA-binding region (mef2-type) is located at residues 58–86; it reads ASTDMDRVLLKYTEYSEPHESRTNTDILE. Disordered stretches follow at residues 94–124, 142–309, and 321–365; these read GLDG…GDPA, VVYG…SPGP, and AGCP…KTQQ. The span at 98–108 shows a compositional bias: acidic residues; it reads PELEPDEGPEE. Over residues 223-240 the composition is skewed to polar residues; that stretch reads NTSRSLYSGLQNPCSTAT. Composition is skewed to low complexity over residues 277–289 and 326–346; these read PQSA…SLRP and PTAG…SPGT. The span at 354–365 shows a compositional bias: polar residues; sequence TSLQASSEKTQQ.

It belongs to the MEF2 family. In terms of assembly, interacts with HDAC7. Heterodimer. Interacts with HDAC9. In terms of tissue distribution, expressed in skeletal and cardiac muscle and brain.

The protein localises to the nucleus. Its function is as follows. Transcriptional activator which binds specifically to the MEF2 element, 5'-YTA[AT](4)TAR-3', found in numerous muscle-specific genes. Activates transcription via this element. May be involved in muscle-specific and/or growth factor-related transcription. The chain is Myocyte-specific enhancer factor 2B (MEF2B) from Homo sapiens (Human).